Here is an 845-residue protein sequence, read N- to C-terminus: Disintegrin and metalloproteinase domain-containing protein 9 (845 aa).

The N-terminal stretch at 1–29 (MGPRALSPLASLRLRWLLACGLLGPVLEA) is a signal peptide. Topologically, residues 30–697 (GRPDLEQTVH…YNAKSTALRD (668 aa)) are extracellular. Residues N144, N154, and N231 are each glycosylated (N-linked (GlcNAc...) asparagine). A Peptidase M12B domain is found at 212–406 (RYVELFIVVD…KGGSCLLNIP (195 aa)). 4 disulfides stabilise this stretch: C322–C401, C363–C385, C365–C370, and C473–C493. H347 is a Zn(2+) binding site. E348 is an active-site residue. H351 and H357 together coordinate Zn(2+). N-linked (GlcNAc...) asparagine glycans are attached at residues N381, N487, and N636. Residues 414-501 (APSCGNKLVD…FCPPDVFIQN (88 aa)) form the Disintegrin domain. Cystine bridges form between C644–C656, C650–C662, and C664–C673. The EGF-like domain occupies 644–698 (CDIQGKCHGHGVCNSNKNCHCEDGWAPPHCDTKGYGGSVDSGPTYNAKSTALRDG). Residues 698–718 (GLLVFFFLIVPLVAAAIFLFI) traverse the membrane as a helical segment. Residues 719–845 (KRDELRKTFR…PAPPLYSSLT (127 aa)) are Cytoplasmic-facing. The tract at residues 729–845 (KKRSQMSDGR…PAPPLYSSLT (117 aa)) is disordered. Residues 734-745 (MSDGRNQANVSR) are compositionally biased toward polar residues. Residues 783–794 (PGGPGVSRPPPG) show a composition bias toward pro residues.

As to quaternary structure, interacts with SH3GL2 and SNX9 through its cytoplasmic tail. Interacts with ITGA6. It depends on Zn(2+) as a cofactor. Post-translationally, proteolytically cleaved in the trans-Golgi network before it reaches the plasma membrane to generate a mature protein. The removal of the pro-domain occurs via cleavage at two different sites. Processed most likely by a pro-protein convertase such as furin, at the boundary between the pro-domain and the catalytic domain. An additional upstream cleavage pro-protein convertase site (Arg-56/Glu-57) has an important role in the activation of ADAM9. Phosphorylation is induced in vitro by phorbol-12-myristate-13-acetate (PMA).

The protein localises to the cell membrane. Synthesized as an inactive form which is proteolytically cleaved to generate an active enzyme. Processing at the upstream site is particularly important for activation of the proenzyme, whereas processing at the boundary between the pro-domain and the catalytic domain does not appear to be essential. Inhibited by hydroxamic acid-based inhibitors. In terms of biological role, metalloprotease that cleaves and releases a number of molecules with important roles in tumorigenesis and angiogenesis, such as TEK, KDR, EPHB4, CD40, VCAM1 and CDH5. May mediate cell-cell, cell-matrix interactions and regulate the motility of cells via interactions with integrins. This Mus musculus (Mouse) protein is Disintegrin and metalloproteinase domain-containing protein 9.